The primary structure comprises 181 residues: MGCCTGRCSLVCLCALQLLSALERQIFDFLGFQWAPILGNFLHIIVVILGLFGTIQYRPRYIMVYTVWTALWVTWNVFIICFYLEVGGLSKDTDLMTFNISVHRSWWREHGPGCVRRVLPPSAHGMMDDYTYVSVTGCVVDFQYLEVIHSAVQILLSLVGFVYACYVISISMEEEDTCRNK.

Transmembrane regions (helical) follow at residues 2–22 (GCCT…LSAL), 35–55 (APIL…FGTI), 62–82 (IMVY…IICF), and 152–172 (VQIL…SISM).

The protein belongs to the NKAIN family. Interacts with ATP1B1. Detected in the brain only and specifically in neurons. Expressed in multiple regions such as cerebral cortex, thalamus, hippocampus, olfactory bulb and brainstem as well as in cerebellum with low expression in granular cell layer.

It is found in the cell membrane. In Mus musculus (Mouse), this protein is Sodium/potassium-transporting ATPase subunit beta-1-interacting protein 3 (Nkain3).